Consider the following 300-residue polypeptide: Acetylglutamate kinase (300 aa).

Residues 73–74 (GG), R95, and N197 each bind substrate.

Belongs to the acetylglutamate kinase family. ArgB subfamily.

Its subcellular location is the cytoplasm. It catalyses the reaction N-acetyl-L-glutamate + ATP = N-acetyl-L-glutamyl 5-phosphate + ADP. The protein operates within amino-acid biosynthesis; L-arginine biosynthesis; N(2)-acetyl-L-ornithine from L-glutamate: step 2/4. Catalyzes the ATP-dependent phosphorylation of N-acetyl-L-glutamate. This is Acetylglutamate kinase from Bordetella bronchiseptica (strain ATCC BAA-588 / NCTC 13252 / RB50) (Alcaligenes bronchisepticus).